A 391-amino-acid polypeptide reads, in one-letter code: GTPase Obg (391 aa).

Residues Met1–Leu159 enclose the Obg domain. Positions Ala160–Lys333 constitute an OBG-type G domain. Residues Gly166–Ser173, Phe191–Val195, Asp213–Gly216, Asn283–Asp286, and Ser314–Ile316 contribute to the GTP site. Mg(2+)-binding residues include Ser173 and Thr193.

Belongs to the TRAFAC class OBG-HflX-like GTPase superfamily. OBG GTPase family. In terms of assembly, monomer. Mg(2+) is required as a cofactor.

The protein resides in the cytoplasm. Its function is as follows. An essential GTPase which binds GTP, GDP and possibly (p)ppGpp with moderate affinity, with high nucleotide exchange rates and a fairly low GTP hydrolysis rate. Plays a role in control of the cell cycle, stress response, ribosome biogenesis and in those bacteria that undergo differentiation, in morphogenesis control. This Photorhabdus laumondii subsp. laumondii (strain DSM 15139 / CIP 105565 / TT01) (Photorhabdus luminescens subsp. laumondii) protein is GTPase Obg.